A 138-amino-acid polypeptide reads, in one-letter code: Gap junction alpha-4 protein (138 aa).

The Cytoplasmic segment spans residues aspartate 1–serine 16. Residues threonine 17–glycine 39 traverse the membrane as a helical segment. Residues glutamate 40–proline 74 are Extracellular-facing. A helical membrane pass occupies residues tyrosine 75 to leucine 97. Over serine 98–alanine 138 the chain is Cytoplasmic.

This sequence belongs to the connexin family. Alpha-type (group II) subfamily. As to quaternary structure, a connexon is composed of a hexamer of connexins.

The protein localises to the cell membrane. It localises to the cell junction. The protein resides in the gap junction. In terms of biological role, one gap junction consists of a cluster of closely packed pairs of transmembrane channels, the connexons, through which materials of low MW diffuse from one cell to a neighboring cell. This Sus scrofa (Pig) protein is Gap junction alpha-4 protein (GJA4).